A 384-amino-acid polypeptide reads, in one-letter code: Probable tRNA sulfurtransferase (384 aa).

A THUMP domain is found at 57-160; the sequence is EEVVDRVRNV…KKTYIYSKRI (104 aa). ATP is bound by residues 177–178, 202–203, Arg-259, Gly-281, and Gln-290; these read ML and YF.

Belongs to the ThiI family.

The protein resides in the cytoplasm. The catalysed reaction is [ThiI sulfur-carrier protein]-S-sulfanyl-L-cysteine + a uridine in tRNA + 2 reduced [2Fe-2S]-[ferredoxin] + ATP + H(+) = [ThiI sulfur-carrier protein]-L-cysteine + a 4-thiouridine in tRNA + 2 oxidized [2Fe-2S]-[ferredoxin] + AMP + diphosphate. The enzyme catalyses [ThiS sulfur-carrier protein]-C-terminal Gly-Gly-AMP + S-sulfanyl-L-cysteinyl-[cysteine desulfurase] + AH2 = [ThiS sulfur-carrier protein]-C-terminal-Gly-aminoethanethioate + L-cysteinyl-[cysteine desulfurase] + A + AMP + 2 H(+). The protein operates within cofactor biosynthesis; thiamine diphosphate biosynthesis. Functionally, catalyzes the ATP-dependent transfer of a sulfur to tRNA to produce 4-thiouridine in position 8 of tRNAs, which functions as a near-UV photosensor. Also catalyzes the transfer of sulfur to the sulfur carrier protein ThiS, forming ThiS-thiocarboxylate. This is a step in the synthesis of thiazole, in the thiamine biosynthesis pathway. The sulfur is donated as persulfide by IscS. In Clostridium acetobutylicum (strain ATCC 824 / DSM 792 / JCM 1419 / IAM 19013 / LMG 5710 / NBRC 13948 / NRRL B-527 / VKM B-1787 / 2291 / W), this protein is Probable tRNA sulfurtransferase.